The chain runs to 264 residues: uncharacterized protein (264 aa).

The ABC transporter domain occupies 3–243; the sequence is LQLDNVSLKR…QILSAFFDTP (241 aa). Residue 35 to 42 participates in ATP binding; sequence GLNGAGKT.

Belongs to the ABC transporter superfamily.

This is an uncharacterized protein from Bacillus subtilis (strain 168).